The sequence spans 403 residues: Phosphopentomutase (403 aa).

6 residues coordinate Mn(2+): aspartate 13, aspartate 298, histidine 303, aspartate 339, histidine 340, and histidine 351.

It belongs to the phosphopentomutase family. It depends on Mn(2+) as a cofactor.

Its subcellular location is the cytoplasm. It catalyses the reaction 2-deoxy-alpha-D-ribose 1-phosphate = 2-deoxy-D-ribose 5-phosphate. It carries out the reaction alpha-D-ribose 1-phosphate = D-ribose 5-phosphate. It functions in the pathway carbohydrate degradation; 2-deoxy-D-ribose 1-phosphate degradation; D-glyceraldehyde 3-phosphate and acetaldehyde from 2-deoxy-alpha-D-ribose 1-phosphate: step 1/2. Functionally, isomerase that catalyzes the conversion of deoxy-ribose 1-phosphate (dRib-1-P) and ribose 1-phosphate (Rib-1-P) to deoxy-ribose 5-phosphate (dRib-5-P) and ribose 5-phosphate (Rib-5-P), respectively. The sequence is that of Phosphopentomutase from Streptococcus pneumoniae serotype 19F (strain G54).